The following is a 149-amino-acid chain: MADQLTEEQIAEFKEAFSLFDKDGDGTITTKELGTVMRSLGQNPTEAELQDMINEVDSDGNGTIDFPEFLSLMARKMKDTDTEEELIEAFKVFDRDGNGFISAAELRHVMTNLGEKLTDEEVDEMIREADVDGDGQINYEEFVKMMMAK.

Ala-2 is subject to N-acetylalanine. 4 consecutive EF-hand domains span residues 8–43 (EQIA…LGQN), 44–79 (PTEA…KMKD), 81–116 (DTEE…LGEK), and 117–149 (LTDE…MMAK). Ca(2+)-binding residues include Asp-21, Asp-23, Asp-25, Thr-27, Glu-32, Asp-57, Asp-59, Asn-61, Thr-63, Glu-68, Asp-94, Asp-96, Asn-98, and Glu-105. N6,N6,N6-trimethyllysine is present on Lys-116. Residues Asp-130, Asp-132, Asp-134, Gln-136, and Glu-141 each contribute to the Ca(2+) site.

It belongs to the calmodulin family.

Calmodulin mediates the control of a large number of enzymes, ion channels and other proteins by Ca(2+). Among the enzymes to be stimulated by the calmodulin-Ca(2+) complex are a number of protein kinases and phosphatases. The chain is Calmodulin from Heterocapsa triquetra (Dinoflagellate).